Reading from the N-terminus, the 466-residue chain is UDP-glycosyltransferase 91B1 (466 aa).

UDP-alpha-D-glucose contacts are provided by residues Thr286, 342-344, 359-367, and 381-384; these read VPQ, HCGWGSAVE, and NLDQ.

It belongs to the UDP-glycosyltransferase family.

This chain is UDP-glycosyltransferase 91B1 (UGT91B1), found in Arabidopsis thaliana (Mouse-ear cress).